The primary structure comprises 1016 residues: DNA polymerase I (1016 aa).

The 5'-3' exonuclease domain occupies 1 to 308; sequence MPNSIWTSSD…MEFTTLTRRV (308 aa). Residues 334–361 form a disordered region; it reads GPDLDAAEPEPVAGGIPEVSGESVPMPP. A 3'-5' exonuclease domain is found at 394–630; the sequence is SAYVTIRDLV…MEARGITVDR (237 aa). The interval 768–1016 is polymerase; the sequence is GRKIRTAFIS…RAATNWDEAH (249 aa).

Belongs to the DNA polymerase type-A family. In terms of assembly, single-chain monomer with multiple functions.

It carries out the reaction DNA(n) + a 2'-deoxyribonucleoside 5'-triphosphate = DNA(n+1) + diphosphate. In addition to polymerase activity, this DNA polymerase exhibits 3'-5' and 5'-3' exonuclease activity. The protein is DNA polymerase I (polA) of Rhizobium leguminosarum.